Consider the following 125-residue polypeptide: Small ribosomal subunit protein eS8 (125 aa).

A disordered region spans residues 1–20 (MLWQGESIRKVTGGRRRPAQ).

Belongs to the eukaryotic ribosomal protein eS8 family. Part of the 30S ribosomal subunit.

The polypeptide is Small ribosomal subunit protein eS8 (Methanoregula boonei (strain DSM 21154 / JCM 14090 / 6A8)).